Consider the following 287-residue polypeptide: Ribosomal RNA small subunit methyltransferase I (287 aa).

The protein belongs to the methyltransferase superfamily. RsmI family.

The protein localises to the cytoplasm. It carries out the reaction cytidine(1402) in 16S rRNA + S-adenosyl-L-methionine = 2'-O-methylcytidine(1402) in 16S rRNA + S-adenosyl-L-homocysteine + H(+). Its function is as follows. Catalyzes the 2'-O-methylation of the ribose of cytidine 1402 (C1402) in 16S rRNA. This chain is Ribosomal RNA small subunit methyltransferase I, found in Streptococcus pyogenes serotype M18 (strain MGAS8232).